Here is a 390-residue protein sequence, read N- to C-terminus: Chorismate synthase (390 aa).

Positions 39 and 45 each coordinate NADP(+). FMN contacts are provided by residues 132-134 (RSS), 253-254 (NA), G298, 313-317 (KPIPT), and R339.

This sequence belongs to the chorismate synthase family. As to quaternary structure, homotetramer. FMNH2 serves as cofactor.

It carries out the reaction 5-O-(1-carboxyvinyl)-3-phosphoshikimate = chorismate + phosphate. It participates in metabolic intermediate biosynthesis; chorismate biosynthesis; chorismate from D-erythrose 4-phosphate and phosphoenolpyruvate: step 7/7. Functionally, catalyzes the anti-1,4-elimination of the C-3 phosphate and the C-6 proR hydrogen from 5-enolpyruvylshikimate-3-phosphate (EPSP) to yield chorismate, which is the branch point compound that serves as the starting substrate for the three terminal pathways of aromatic amino acid biosynthesis. This reaction introduces a second double bond into the aromatic ring system. This chain is Chorismate synthase, found in Shouchella clausii (strain KSM-K16) (Alkalihalobacillus clausii).